Consider the following 453-residue polypeptide: Chromosomal replication initiator protein DnaA (453 aa).

The segment at M1–Y71 is domain I, interacts with DnaA modulators. Residues Y71 to E114 are domain II. The tract at residues Q115–S331 is domain III, AAA+ region. Residues G159, G161, K162, and T163 each coordinate ATP. The interval Q332–V453 is domain IV, binds dsDNA.

Belongs to the DnaA family. As to quaternary structure, oligomerizes as a right-handed, spiral filament on DNA at oriC.

It is found in the cytoplasm. In terms of biological role, plays an essential role in the initiation and regulation of chromosomal replication. ATP-DnaA binds to the origin of replication (oriC) to initiate formation of the DNA replication initiation complex once per cell cycle. Binds the DnaA box (a 9 base pair repeat at the origin) and separates the double-stranded (ds)DNA. Forms a right-handed helical filament on oriC DNA; dsDNA binds to the exterior of the filament while single-stranded (ss)DNA is stabiized in the filament's interior. The ATP-DnaA-oriC complex binds and stabilizes one strand of the AT-rich DNA unwinding element (DUE), permitting loading of DNA polymerase. After initiation quickly degrades to an ADP-DnaA complex that is not apt for DNA replication. Binds acidic phospholipids. The protein is Chromosomal replication initiator protein DnaA of Staphylococcus aureus (strain bovine RF122 / ET3-1).